The following is a 162-amino-acid chain: Lipoprotein signal peptidase (162 aa).

4 helical membrane passes run 9–29 (LCLV…LVAT), 39–59 (VIHG…FGLF), 66–86 (VRKF…LWLY), and 95–115 (VLSF…IDRF). Catalysis depends on residues Asp122 and Asp140. A helical membrane pass occupies residues 136–156 (FNVADSAITIGMVVFVYHVIF).

Belongs to the peptidase A8 family.

It is found in the cell inner membrane. The enzyme catalyses Release of signal peptides from bacterial membrane prolipoproteins. Hydrolyzes -Xaa-Yaa-Zaa-|-(S,diacylglyceryl)Cys-, in which Xaa is hydrophobic (preferably Leu), and Yaa (Ala or Ser) and Zaa (Gly or Ala) have small, neutral side chains.. It functions in the pathway protein modification; lipoprotein biosynthesis (signal peptide cleavage). In terms of biological role, this protein specifically catalyzes the removal of signal peptides from prolipoproteins. The protein is Lipoprotein signal peptidase of Desulforapulum autotrophicum (strain ATCC 43914 / DSM 3382 / VKM B-1955 / HRM2) (Desulfobacterium autotrophicum).